Reading from the N-terminus, the 262-residue chain is pFDCC methylesterase MES16 (262 aa).

The active-site Acyl-ester intermediate is the serine 87. Residues aspartate 211 and histidine 239 each act as charge relay system in the active site.

The protein belongs to the AB hydrolase superfamily. Methylesterase family.

It localises to the cytoplasm. The catalysed reaction is methyl (indol-3-yl)acetate + H2O = (indol-3-yl)acetate + methanol + H(+). It carries out the reaction methyl (-)-jasmonate + H2O = jasmonate + methanol + H(+). The enzyme catalyses primary fluorescent dioxobilin-type chlorophyll catabolite + H2O = O13(4)-desmethyl pFDCC + methanol + H(+). It functions in the pathway plant hormone biosynthesis. The protein operates within lipid metabolism; oxylipin biosynthesis. Its pathway is porphyrin-containing compound metabolism; chlorophyll degradation. Involved in the chlorophyll breakdown by its action in fluorescent chlorophyll catabolites (FCCs) demethylation. Demethylates the C13(2)-carboxymethyl group present at the isocyclic ring of chlorophyll. Uses primary fluorescent dioxobilin-type chlorophyll catabolite (pFDCC) as substrate to produce O13(4)-desmethyl pFDCC. Also able to catalyze pheophorbides in vitro. Methylesterase shown to have carboxylesterase activity, methyl indole-3-acetic acid (MeIAA) esterase activity and methyl jasmonate (MeJA) esterase activity in vitro. This is pFDCC methylesterase MES16 from Arabidopsis thaliana (Mouse-ear cress).